Consider the following 511-residue polypeptide: GMP synthase [glutamine-hydrolyzing] (511 aa).

In terms of domain architecture, Glutamine amidotransferase type-1 spans 5-195; it reads MILVLDFGGQ…LYNICGCKGD (191 aa). Cysteine 82 functions as the Nucleophile in the catalytic mechanism. Active-site residues include histidine 169 and glutamate 171. The GMPS ATP-PPase domain maps to 196–386; the sequence is WKMSSFVENS…LGIPEDLVWR (191 aa). Position 223–229 (223–229) interacts with ATP; the sequence is SGGVDSS.

As to quaternary structure, homodimer.

The catalysed reaction is XMP + L-glutamine + ATP + H2O = GMP + L-glutamate + AMP + diphosphate + 2 H(+). It participates in purine metabolism; GMP biosynthesis; GMP from XMP (L-Gln route): step 1/1. Functionally, catalyzes the synthesis of GMP from XMP. This chain is GMP synthase [glutamine-hydrolyzing], found in Ruminiclostridium cellulolyticum (strain ATCC 35319 / DSM 5812 / JCM 6584 / H10) (Clostridium cellulolyticum).